Reading from the N-terminus, the 215-residue chain is A-type ATP synthase subunit E (215 aa).

This sequence belongs to the V-ATPase E subunit family. In terms of assembly, has multiple subunits with at least A(3), B(3), C, D, E, F, H, I and proteolipid K(x).

The protein resides in the cell membrane. Its function is as follows. Component of the A-type ATP synthase that produces ATP from ADP in the presence of a proton gradient across the membrane. This is A-type ATP synthase subunit E from Thermofilum pendens (strain DSM 2475 / Hrk 5).